A 306-amino-acid chain; its full sequence is Pantothenate kinase (306 aa).

90–97 (GSVAVGKS) serves as a coordination point for ATP.

The protein belongs to the prokaryotic pantothenate kinase family.

The protein localises to the cytoplasm. The catalysed reaction is (R)-pantothenate + ATP = (R)-4'-phosphopantothenate + ADP + H(+). The protein operates within cofactor biosynthesis; coenzyme A biosynthesis; CoA from (R)-pantothenate: step 1/5. This chain is Pantothenate kinase, found in Lactococcus lactis subsp. cremoris (strain MG1363).